The primary structure comprises 438 residues: Glycosyl hydrolase family 109 protein (438 aa).

The segment at residues Met1–Ala33 is a signal peptide (tat-type signal). Residues Gly52–Arg53, Asp74, Trp125–His128, Glu145–Val146, and Asn174 contribute to the NAD(+) site. Substrate contacts are provided by residues Tyr203, Arg221, Tyr233–His236, and Tyr315. NAD(+) is bound at residue Tyr233. The disordered stretch occupies residues Gly408–Val438.

This sequence belongs to the Gfo/Idh/MocA family. Glycosyl hydrolase 109 subfamily. The cofactor is NAD(+). In terms of processing, predicted to be exported by the Tat system. The position of the signal peptide cleavage has not been experimentally proven.

In terms of biological role, glycosidase. The chain is Glycosyl hydrolase family 109 protein from Solibacter usitatus (strain Ellin6076).